A 56-amino-acid polypeptide reads, in one-letter code: Small ribosomal subunit protein uS14 (56 aa).

Residues Cys-21, Cys-24, Cys-39, and Cys-42 each contribute to the Zn(2+) site.

This sequence belongs to the universal ribosomal protein uS14 family. In terms of assembly, component of the 40S small ribosomal subunit. The cofactor is Zn(2+).

Its subcellular location is the cytoplasm. The protein resides in the cytosol. It is found in the rough endoplasmic reticulum. The chain is Small ribosomal subunit protein uS14 (RpS29) from Spodoptera frugiperda (Fall armyworm).